The primary structure comprises 669 residues: MSESKQQYLEELKQQLHYHAVRYYVEDNPEIPDAEYDRMMRELMAIEAEHPEWISVDSPSQRVGGVALDSFRQVTHEIPMLSLDNAFSDEELESFLKRAQDRMPSAHIDAFCCEPKLDGLAVSLLYENGVLVQAATRGDGTTGENITENVRTIASVPLKLQGEGWPSRIEVRGEVFMPKAGFEKLNDIARKKGEKVFVNPRNAAAGSLRQLDSKITATRPLAFYAYSVGVVEGISLSSSHYQRFLQLKQWGLPMCPETKLVNGLESVKAFYADILNRRDALPYEIDGVVIKIDDIVIQEKLGFVARAPRWAIAYKFPAQEELTLLNDVEFQVGRTGAITPVAKLEPVFVGGVTVSNATLHNADEIERLGVMVGDTVVIRRAGDVIPQIVSVVKDRRKGDEKNIIFPTACPVCHSHVERIEGEAVTRCSGGLVCQAQRKEALKHFVSRKALDVDGLGDKVIEQLVDKEMVETPADLFTLSAGVLTVLERMGPKSAQNIVNALNVAKETTLARFLYSLGIREVGEATAANLARHFKTLEAIQTATHEQLIEVPDIGEVVARHITAFFAEEKNQRVVQALIEQGIVWPAVEELGSEIPQPLAGKVVVLTGTLTQLSRGDAKAALERLGAKVTGSVSKKTDIVFAGEAAGSKLTKAQELGVEIQTEQDLLALL.

NAD(+)-binding positions include 33-37 (DAEYD), 82-83 (SL), and Glu-114. The active-site N6-AMP-lysine intermediate is Lys-116. Residues Arg-137, Glu-174, Lys-291, and Lys-315 each coordinate NAD(+). Positions 409, 412, 427, and 433 each coordinate Zn(2+). The BRCT domain maps to 593–669 (EIPQPLAGKV…QTEQDLLALL (77 aa)).

This sequence belongs to the NAD-dependent DNA ligase family. LigA subfamily. Requires Mg(2+) as cofactor. The cofactor is Mn(2+).

It catalyses the reaction NAD(+) + (deoxyribonucleotide)n-3'-hydroxyl + 5'-phospho-(deoxyribonucleotide)m = (deoxyribonucleotide)n+m + AMP + beta-nicotinamide D-nucleotide.. Functionally, DNA ligase that catalyzes the formation of phosphodiester linkages between 5'-phosphoryl and 3'-hydroxyl groups in double-stranded DNA using NAD as a coenzyme and as the energy source for the reaction. It is essential for DNA replication and repair of damaged DNA. The sequence is that of DNA ligase from Vibrio vulnificus (strain CMCP6).